The sequence spans 167 residues: NAD(P)H-quinone oxidoreductase subunit I, chloroplastic (167 aa).

4Fe-4S ferredoxin-type domains follow at residues 55–84 (GRIH…VDWK) and 95–124 (LNYS…MTEE). 8 residues coordinate [4Fe-4S] cluster: C64, C67, C70, C74, C104, C107, C110, and C114.

It belongs to the complex I 23 kDa subunit family. NDH is composed of at least 16 different subunits, 5 of which are encoded in the nucleus. It depends on [4Fe-4S] cluster as a cofactor.

Its subcellular location is the plastid. It localises to the chloroplast thylakoid membrane. It catalyses the reaction a plastoquinone + NADH + (n+1) H(+)(in) = a plastoquinol + NAD(+) + n H(+)(out). The catalysed reaction is a plastoquinone + NADPH + (n+1) H(+)(in) = a plastoquinol + NADP(+) + n H(+)(out). Its function is as follows. NDH shuttles electrons from NAD(P)H:plastoquinone, via FMN and iron-sulfur (Fe-S) centers, to quinones in the photosynthetic chain and possibly in a chloroplast respiratory chain. The immediate electron acceptor for the enzyme in this species is believed to be plastoquinone. Couples the redox reaction to proton translocation, and thus conserves the redox energy in a proton gradient. In Citrus sinensis (Sweet orange), this protein is NAD(P)H-quinone oxidoreductase subunit I, chloroplastic.